Consider the following 420-residue polypeptide: Mannose-1-phosphate guanylyltransferase regulatory subunit alpha (420 aa).

A substrate-binding domain region spans residues 2–251 (LKAVILIGGP…DGIWSQIKSA (250 aa)). GDP-alpha-D-mannose contacts are provided by glutamate 85 and glutamine 247. The hexapeptide repeat domain stretch occupies residues 273–420 (LAKHTPGGPR…SRSFTNQIIL (148 aa)). The segment at 356–384 (TPNDPNPNDPRARMDSESLFKDGKLLPAI) is C-loop.

The protein belongs to the transferase hexapeptide repeat family. As to quaternary structure, component of the GMPPA-GMPPB mannose-1-phosphate guanylyltransferase complex composed of 4 GMPPA subunits and 8 GMPPB subunits; the complex is organized into three layers, a central layer made up of 2 GMPPA dimers sandwiched between two layers each made up of 2 GMPPB dimers.

The protein localises to the cytoplasm. Functionally, regulatory subunit of the GMPPA-GMPPB mannose-1-phosphate guanylyltransferase complex; reduces the catalytic activity of GMPPB when part of the complex. Mediates allosteric feedback inhibition of GMPPB catalytic activity upon binding GDP-alpha-D-mannose. Together with GMPPB regulates GDP-alpha-D-mannose levels. This Papio anubis (Olive baboon) protein is Mannose-1-phosphate guanylyltransferase regulatory subunit alpha (GMPPA).